The sequence spans 366 residues: Chorismate synthase (366 aa).

An NADP(+)-binding site is contributed by Arg-48. Residues 125–127 (RSS), 238–239 (NA), Gly-278, 293–297 (KPTSS), and Arg-319 contribute to the FMN site.

The protein belongs to the chorismate synthase family. Homotetramer. Requires FMNH2 as cofactor.

It catalyses the reaction 5-O-(1-carboxyvinyl)-3-phosphoshikimate = chorismate + phosphate. The protein operates within metabolic intermediate biosynthesis; chorismate biosynthesis; chorismate from D-erythrose 4-phosphate and phosphoenolpyruvate: step 7/7. In terms of biological role, catalyzes the anti-1,4-elimination of the C-3 phosphate and the C-6 proR hydrogen from 5-enolpyruvylshikimate-3-phosphate (EPSP) to yield chorismate, which is the branch point compound that serves as the starting substrate for the three terminal pathways of aromatic amino acid biosynthesis. This reaction introduces a second double bond into the aromatic ring system. The protein is Chorismate synthase of Hydrogenovibrio crunogenus (strain DSM 25203 / XCL-2) (Thiomicrospira crunogena).